The primary structure comprises 547 residues: Sensor histidine kinase CitA (547 aa).

Over 1 to 23 the chain is Cytoplasmic; sequence MSIYPMYTRKITHWFARRSFQNR. The helical transmembrane segment at 24–44 threads the bilayer; the sequence is IFLLILFTSTIVMLAMSWYLT. Over 45–180 the chain is Periplasmic; it reads DITEERLHYQ…TIEQLENWLS (136 aa). Citrate-binding residues include arginine 109, histidine 112, arginine 150, and lysine 152. The chain crosses the membrane as a helical span at residues 181–201; sequence LQISSLLIPMAIMLLLLLFCA. At 202–547 the chain is on the cytoplasmic side; sequence RRFSLHIKKQ…IPLTRDEHHG (346 aa). A PAS domain is found at 225–264; that stretch reads IQQSVLFESVFEGLIAIDSDYKITAINQTARRLLNLSQPE. Residues 347-542 form the Histidine kinase domain; that stretch reads AVQHEHRNLI…IFTLYIPLTR (196 aa). Position 350 is a phosphohistidine; by autocatalysis (histidine 350).

As to quaternary structure, homodimer. In vitro CitB and the CitA kinase domain form a complex, formation of which is enhanced by ATP. Autophosphorylated.

The protein resides in the cell inner membrane. It carries out the reaction ATP + protein L-histidine = ADP + protein N-phospho-L-histidine.. In terms of biological role, member of the two-component regulatory system CitA/CitB. Probably activates CitB by phosphorylation. The periplasmic domain binds H-citrate(2-), which is essential for induction of the citrate-fermentation genes. This is Sensor histidine kinase CitA (citA) from Klebsiella pneumoniae.